The sequence spans 210 residues: Probable peroxygenase 7 (210 aa).

The disordered stretch occupies residues Met1–Lys24. One can recognise an EF-hand domain in the interval Glu25 to Gly60. His33 is a binding site for heme. 5 residues coordinate Ca(2+): Asp38, Asn40, Asp42, Thr44, and Glu49. The Proline-knot signature appears at Pro81–Pro90. Position 188 is a phosphoserine (Ser188).

It belongs to the caleosin family. Homodimer. Heme b is required as a cofactor. It depends on Ca(2+) as a cofactor. Expressed in pollen coat.

It localises to the secreted. It catalyses the reaction RH + ROOH = ROH + ROH.. In terms of biological role, probable calcium-binding peroxygenase. May be involved in pollination. In Arabidopsis thaliana (Mouse-ear cress), this protein is Probable peroxygenase 7 (PXG7).